The chain runs to 90 residues: DNA-binding protein HU-alpha (90 aa).

Belongs to the bacterial histone-like protein family. Heterodimer of an alpha and a beta chain.

In terms of biological role, histone-like DNA-binding protein which is capable of wrapping DNA to stabilize it, and thus to prevent its denaturation under extreme environmental conditions. The sequence is that of DNA-binding protein HU-alpha (hupA) from Vibrio proteolyticus (Aeromonas proteolytica).